The following is a 552-amino-acid chain: HTH-type transcriptional regulator SgrR (552 aa).

The segment at 163–493 is solute-binding; sequence ELKPDLAHHW…DDLDTDAQQW (331 aa).

Activates the small RNA gene sgrS under glucose-phosphate stress conditions as well as yfdZ. Represses its own transcription under both stress and non-stress conditions. Might act as a sensor of the intracellular accumulation of phosphoglucose by binding these molecules in its C-terminal solute-binding domain. The sequence is that of HTH-type transcriptional regulator SgrR from Pectobacterium atrosepticum (strain SCRI 1043 / ATCC BAA-672) (Erwinia carotovora subsp. atroseptica).